The chain runs to 166 residues: Small ribosomal subunit protein eS10 (166 aa).

The tract at residues 95 to 166 (RRQTRPETAR…FGRGRGQQPQ (72 aa)) is disordered. The segment covering 98–129 (TRPETARPRPKGLEGERPARLARGEGDRDAYR) has biased composition (basic and acidic residues). Residues 143-154 (AGAGAATEFQFR) are compositionally biased toward low complexity. A compositionally biased stretch (gly residues) spans 155–166 (GGFGRGRGQQPQ).

It belongs to the eukaryotic ribosomal protein eS10 family. Component of the small ribosomal subunit.

The protein resides in the cytoplasm. It localises to the nucleus. Its subcellular location is the nucleolus. In terms of biological role, component of the 40S ribosomal subunit. The ribosome is a large ribonucleoprotein complex responsible for the synthesis of proteins in the cell. In Ictalurus punctatus (Channel catfish), this protein is Small ribosomal subunit protein eS10 (rps10).